The sequence spans 382 residues: MLLVTNDFPPRRGGIQSYLEAFVGELVRTHELTVYAPKWKGAEEYDEKAARSGYRVVRHPTTLMLPEPTVASRMKRLIGEHDIETVWFGAAAPLALLGPLARRAGARRIVASTHGHEVGWSMLPVARTALRRIGNDADVVTFVSRYTRSRFASAFGPSAALEHLPPGVDTDRFAPDPDARARMRERYGLGDRPVVVCLSRLVPRKGQDMLIRALPELRRRVPDTALAIVGGGPYLETLQRMASDLGVAEHVVFTRGIPAEELPAHHAMADVFAMPCRTRGAGLDVEGLGIVYLEASACGVPVVAGRSGGAPETVLDGKTGTVVDGTDVDAITTAVGDLLADPRRAAAMGVAGRHWALDNWQWRTRGARLAELLSGRREARQA.

The GDP-alpha-D-mannose site is built by R200, K205, I257, and E294.

Belongs to the glycosyltransferase group 1 family. Glycosyltransferase 4 subfamily.

It carries out the reaction a 1,2-diacyl-sn-glycero-3-phospho-[alpha-D-mannopyranosyl-(1&lt;-&gt;6)-D-myo-inositol] + GDP-alpha-D-mannose = a 2,6-O-bis(alpha-D-mannopyranosyl)-1-phosphatidyl-1D-myo-inositol + GDP + H(+). It catalyses the reaction a 1,2-diacyl-sn-glycero-3-phospho-[alpha-D-6-acyl-mannopyranosyl-(1&lt;-&gt;6)-D-myo-inositol] + GDP-alpha-D-mannose = a 2-O-(alpha-D-mannosyl)-6-O-(6-O-acyl-alpha-D-mannosyl)-1-phosphatidyl-1D-myo-inositol + GDP + H(+). The protein operates within phospholipid metabolism; phosphatidylinositol metabolism. In terms of biological role, involved in the biosynthesis of phosphatidyl-myo-inositol mannosides (PIM) which are early precursors in the biosynthesis of lipomannans (LM) and lipoarabinomannans (LAM). Catalyzes the addition of a mannosyl residue from GDP-D-mannose (GDP-Man) to the position 6 of a phosphatidyl-myo-inositol bearing an alpha-1,2-linked mannose residue (PIM1) to generate phosphatidyl-myo-inositol bearing alpha-1,2- and alpha-1,6-linked mannose residues (Ac1PIM2). PimB also catalyzes the addition of a mannosyl residue from GDP-Man to the position 6 of phosphatidyl-myo-inositol bearing an acylated alpha-1,2-linked mannose residue (Ac1PIM1) to generate monoacylated phosphatidyl-myo-inositol bearing alpha-1,2- and alpha-1,6-linked mannose residues (Ac1PIM2). The addition of the second mannosyl residue by PimB preferentially occurs before the acylation of the mannosyl residue transferred by PimA. Also able to transfer a mannosyl residue from GDP-Man to the position 6 of a phosphatidyl-myo-inositol (PI), but this reaction is very slow. This chain is GDP-mannose-dependent alpha-(1-6)-phosphatidylinositol monomannoside mannosyltransferase, found in Mycolicibacterium smegmatis (strain ATCC 700084 / mc(2)155) (Mycobacterium smegmatis).